The chain runs to 370 residues: Chloromuconate cycloisomerase (370 aa).

The Proton acceptor role is filled by Lys165. Asp194, Glu220, and Asp245 together coordinate Mn(2+). Residue Glu323 is the Proton donor of the active site.

Belongs to the mandelate racemase/muconate lactonizing enzyme family. Mn(2+) serves as cofactor.

The catalysed reaction is 2-[(2R)-2-chloro-2,5-dihydro-5-oxofuryl]acetate = 3-chloro-cis,cis-muconate + H(+). It participates in aromatic compound metabolism; 3-chlorocatechol degradation. The protein is Chloromuconate cycloisomerase (tfdDI) of Cupriavidus pinatubonensis (strain JMP 134 / LMG 1197) (Cupriavidus necator (strain JMP 134)).